A 239-amino-acid chain; its full sequence is EF-hand domain-containing protein D1 (239 aa).

The segment covering 1–18 (MASEELACKLERRLRREE) has biased composition (basic and acidic residues). A disordered region spans residues 1-53 (MASEELACKLERRLRREEAEESGPQLAPLGAPAPEPKPEPEPPARAPTASADA). 2 EF-hand domains span residues 90 to 125 (RLIKDLESMFKLYDAGRDGFIDLMELKLMMEKLGAP) and 126 to 161 (QTHLGLKSMIKEVDEDFDGKLSFREFLLIFHKAAAG). Asp-103, Asp-107, Glu-114, Asp-139, Asp-141, Asp-143, Lys-145, and Glu-150 together coordinate Ca(2+). Ser-201 is modified (phosphoserine).

It localises to the mitochondrion inner membrane. Functionally, acts as a calcium sensor for mitochondrial flash (mitoflash) activation, an event characterized by stochastic bursts of superoxide production. May play a role in neuronal differentiation. The protein is EF-hand domain-containing protein D1 (EFHD1) of Homo sapiens (Human).